Reading from the N-terminus, the 651-residue chain is L-type lectin-domain containing receptor kinase IX.1 (651 aa).

Positions 1–19 (MANSILLFSFVLVLPFVCS) are cleaved as a signal peptide. Positions 20 to 251 (VQFNISRFGS…GNRLLSWEFS (232 aa)) are legume-lectin like. Residues 20–269 (VQFNISRFGS…KKSQNDKKGM (250 aa)) lie on the Extracellular side of the membrane. Residues asparagine 23, asparagine 125, asparagine 129, asparagine 162, asparagine 169, asparagine 174, asparagine 195, and asparagine 211 are each glycosylated (N-linked (GlcNAc...) asparagine). The helical transmembrane segment at 270-290 (IIGISVSGFVLLTFFITSLIV) threads the bilayer. Topologically, residues 291 to 651 (FLKRKQQKKK…VTFSSAQHGR (361 aa)) are cytoplasmic. A Protein kinase domain is found at 335-616 (FADDRKLGEG…LNLEAPVPHL (282 aa)). ATP contacts are provided by residues 341 to 349 (LGEGGFGAV) and lysine 364. The Proton acceptor role is filled by aspartate 459. The segment at 630–651 (SNTTSVSSGGATVTFSSAQHGR) is disordered.

It in the C-terminal section; belongs to the protein kinase superfamily. Ser/Thr protein kinase family. This sequence in the N-terminal section; belongs to the leguminous lectin family. As to quaternary structure, interacts with ABCG40.

The protein localises to the cell membrane. It carries out the reaction L-seryl-[protein] + ATP = O-phospho-L-seryl-[protein] + ADP + H(+). The enzyme catalyses L-threonyl-[protein] + ATP = O-phospho-L-threonyl-[protein] + ADP + H(+). In terms of biological role, promotes hydrogen peroxide H(2)O(2) production and cell death. Functionally, involved in resistance response to the pathogenic oomycetes Phytophthora infestans and Phytophthora capsici. The polypeptide is L-type lectin-domain containing receptor kinase IX.1 (Arabidopsis thaliana (Mouse-ear cress)).